A 785-amino-acid polypeptide reads, in one-letter code: E3 UFM1-protein ligase 1 homolog (785 aa).

The interval 404–483 is disordered; it reads GGNASNQLDD…GGGGSNKKSV (80 aa).

This sequence belongs to the UFL1 family.

Its function is as follows. E3 UFM1-protein ligase that mediates ufmylation of target proteins. The chain is E3 UFM1-protein ligase 1 homolog from Drosophila willistoni (Fruit fly).